We begin with the raw amino-acid sequence, 493 residues long: Angiopoietin-related protein 2 (493 aa).

The signal sequence occupies residues 1–22; sequence MRPLCVTCWWLGLLAAMGAVAG. Coiled-coil stretches lie at residues 76 to 115 and 152 to 206; these read PEVL…VDGG and ALEL…HCQR. Residues Asn-164 and Asn-192 are each glycosylated (N-linked (GlcNAc...) asparagine). The 221-residue stretch at 269–489 folds into the Fibrinogen C-terminal domain; it reads DKPSGPWRDC…KVVMMIRPNP (221 aa). Intrachain disulfides connect Cys-278/Cys-307 and Cys-430/Cys-443.

Post-translationally, N-glycosylated. As to expression, widely expressed in heart, small intestine, spleen and stomach. Also found in lower levels in colon, ovary, adrenal gland, skeletal muscle and in prostate.

Its subcellular location is the secreted. Induces sprouting in endothelial cells through an autocrine and paracrine action. The sequence is that of Angiopoietin-related protein 2 (ANGPTL2) from Homo sapiens (Human).